Consider the following 473-residue polypeptide: Photosystem II CP43 reaction center protein (473 aa).

The propeptide occupies 1 to 14 (MKTLYSLRRFYPVE). T15 is subject to N-acetylthreonine. T15 carries the post-translational modification Phosphothreonine. A run of 5 helical transmembrane segments spans residues 69–93 (LFEVAHFVPEKPMYEQGLILLPHLA), 134–155 (LLGPETLEESFPFFGYVWKDRN), 178–200 (KALYFGGVYDTWAPGGGDVRKIT), 255–275 (KPFAWARRALVWSGEAYLSYS), and 291–312 (WFNNTAYPSEFYGPTGPEASQA). [CaMn4O5] cluster is bound at residue E367. The helical transmembrane segment at 447–471 (RARAAAAGFEKGIDRDFEPVLSMTP) threads the bilayer.

This sequence belongs to the PsbB/PsbC family. PsbC subfamily. As to quaternary structure, PSII is composed of 1 copy each of membrane proteins PsbA, PsbB, PsbC, PsbD, PsbE, PsbF, PsbH, PsbI, PsbJ, PsbK, PsbL, PsbM, PsbT, PsbX, PsbY, PsbZ, Psb30/Ycf12, at least 3 peripheral proteins of the oxygen-evolving complex and a large number of cofactors. It forms dimeric complexes. It depends on Binds multiple chlorophylls and provides some of the ligands for the Ca-4Mn-5O cluster of the oxygen-evolving complex. It may also provide a ligand for a Cl- that is required for oxygen evolution. PSII binds additional chlorophylls, carotenoids and specific lipids. as a cofactor.

Its subcellular location is the plastid. The protein resides in the chloroplast thylakoid membrane. Its function is as follows. One of the components of the core complex of photosystem II (PSII). It binds chlorophyll and helps catalyze the primary light-induced photochemical processes of PSII. PSII is a light-driven water:plastoquinone oxidoreductase, using light energy to abstract electrons from H(2)O, generating O(2) and a proton gradient subsequently used for ATP formation. This Buxus microphylla (Littleleaf boxwood) protein is Photosystem II CP43 reaction center protein.